The sequence spans 372 residues: Prostaglandin E synthase 2 (372 aa).

The Lumenal segment spans residues 1–54 (MAHAVRALWPHGRALAWRLGDRPALGLHAQSRAGFTGAAGGSGPAATARKGGPR). The helical transmembrane segment at 55 to 71 (LLGAAALALGGALGLYH) threads the bilayer. At 72–372 (TARWHLRAQD…VEKAIAEAPQ (301 aa)) the chain is on the cytoplasmic side. Residues 87-190 (SATQLSLSSR…DIITYYPPMK (104 aa)) form the Glutaredoxin domain. Ser92 bears the Phosphoserine mark. Residues Val145 and 161–162 (DS) each bind glutathione. The GST C-terminal domain occupies 259 to 372 (DYIVKEGNFG…VEKAIAEAPQ (114 aa)).

Belongs to the GST superfamily. May interact with CEBPB. Interacts with EXOSC10. Homodimer. In terms of processing, synthesized as a Golgi membrane-associated protein, and the proteolytic removal of the N-terminal hydrophobic domain leads to the formation of a mature cytosolic enzyme. In terms of tissue distribution, detected in heart (at protein level). Widely expressed. Expressed in heart &gt; kidney &gt; muscle &gt; testis &gt; endometrium = ovary &gt; myometrium = spleen = lung. In endometrium, it is mainly expressed in luminal epithelial cells followed by glandular epithelial cells, but expression is also present in stromal cells at a lower level.

It localises to the microsome membrane. It is found in the cytoplasm. It catalyses the reaction prostaglandin H2 = prostaglandin E2. The catalysed reaction is prostaglandin H2 = (12S)-hydroxy-(5Z,8E,10E)-heptadecatrienoate + malonaldehyde. Its pathway is lipid metabolism; prostaglandin biosynthesis. Its activity is regulated as follows. Isomerase activity is increased by sulfhydril compounds. Dithiothreitol (DTT) is most effective, followed by glutathione (GSH) and 2-mercaptoethanol. Its function is as follows. Isomerase that catalyzes the conversion of PGH2 into the more stable prostaglandin E2 (PGE2) (in vitro). The biological function and the GSH-dependent property of PTGES2 is still under debate. In vivo, PTGES2 could form a complex with GSH and heme and would not participate in PGE2 synthesis but would catalyze the degradation of prostaglandin E2 H2 (PGH2) to 12(S)-hydroxy-5(Z),8(E),10(E)-heptadecatrienoic acid (HHT) and malondialdehyde (MDA). This is Prostaglandin E synthase 2 (PTGES2) from Bos taurus (Bovine).